We begin with the raw amino-acid sequence, 110 residues long: Putative UPF0377 protein YIR040C (110 aa).

It belongs to the UPF0377 family.

In Saccharomyces cerevisiae (strain ATCC 204508 / S288c) (Baker's yeast), this protein is Putative UPF0377 protein YIR040C.